Here is a 545-residue protein sequence, read N- to C-terminus: Chaperonin GroEL (545 aa).

Residues 30 to 33 (TLGP), K51, 87 to 91 (DGTTT), G415, and D495 each bind ATP.

Belongs to the chaperonin (HSP60) family. In terms of assembly, forms a cylinder of 14 subunits composed of two heptameric rings stacked back-to-back. Interacts with the co-chaperonin GroES.

It localises to the cytoplasm. The catalysed reaction is ATP + H2O + a folded polypeptide = ADP + phosphate + an unfolded polypeptide.. Together with its co-chaperonin GroES, plays an essential role in assisting protein folding. The GroEL-GroES system forms a nano-cage that allows encapsulation of the non-native substrate proteins and provides a physical environment optimized to promote and accelerate protein folding. In Shewanella sp. (strain W3-18-1), this protein is Chaperonin GroEL.